The primary structure comprises 447 residues: Transcription factor azf1 (447 aa).

Disordered regions lie at residues 125-155 (HNGA…NEVE) and 174-199 (QSPG…PQSY). The span at 127–139 (GASQQPPGAQSSS) shows a compositional bias: low complexity. Positions 140-155 (NEEGAQGKSSSSNEVE) are enriched in polar residues. 4 C2H2-type zinc fingers span residues 225-249 (YACT…MRAH), 255-279 (FVCK…QRRH), 285-307 (FSCD…KITH), and 313-338 (FTCL…NKFH). The interval 377 to 447 (NKGIKGRGKD…EPYFIERQAH (71 aa)) is disordered. The segment covering 397–416 (PGSESRRRIEPLSSTDDKMR) has biased composition (basic and acidic residues). Over residues 421–431 (GDTSMYNGGSS) the composition is skewed to polar residues.

The protein resides in the nucleus. Functionally, transcription factor that acts as a positive regulator of ochratoxin A (OTA) biosynthesis via controlling the expression of antioxidant genes and oxidative phosphorylation genes. The polypeptide is Transcription factor azf1 (Aspergillus niger (strain ATCC MYA-4892 / CBS 513.88 / FGSC A1513)).